We begin with the raw amino-acid sequence, 531 residues long: Efflux pump terG (531 aa).

The segment covering 1–11 (MSSSTLEGQET) has biased composition (polar residues). Residues 1–27 (MSSSTLEGQETASHHSKNSPSRHGDDG) form a disordered region. 13 helical membrane-spanning segments follow: residues 86–106 (GKLS…ILIG), 117–137 (AIFV…GVSV), 145–165 (ILAR…ALAI), 179–199 (FAWF…FGPL), 207–227 (WIYW…IVAI), 249–269 (IDLL…FAWN), 280–300 (YVYV…YVEL), 319–339 (FVFG…FYVI), 351–371 (IQMA…ALIV), 380–400 (ASSI…LMAL), 402–422 (PVHS…TFAM), 447–467 (SVIM…AGTI), and 488–508 (TLWF…IFLL).

The protein belongs to the major facilitator superfamily.

The protein resides in the cell membrane. Its function is as follows. Efflux pump that might be required for efficient secretion of terrein or other secondary metabolies produced by the terrein genne cluster. The protein is Efflux pump terG of Aspergillus terreus (strain NIH 2624 / FGSC A1156).